Consider the following 188-residue polypeptide: Pyridoxal 5'-phosphate synthase subunit PdxT (188 aa).

Gly-46 to Ser-48 is an L-glutamine binding site. Residue Cys-78 is the Nucleophile of the active site. L-glutamine contacts are provided by residues Arg-105 and Ile-133–Arg-134. Active-site charge relay system residues include His-169 and Glu-171.

Belongs to the glutaminase PdxT/SNO family. In the presence of PdxS, forms a dodecamer of heterodimers. Only shows activity in the heterodimer.

The catalysed reaction is aldehydo-D-ribose 5-phosphate + D-glyceraldehyde 3-phosphate + L-glutamine = pyridoxal 5'-phosphate + L-glutamate + phosphate + 3 H2O + H(+). It carries out the reaction L-glutamine + H2O = L-glutamate + NH4(+). It participates in cofactor biosynthesis; pyridoxal 5'-phosphate biosynthesis. Functionally, catalyzes the hydrolysis of glutamine to glutamate and ammonia as part of the biosynthesis of pyridoxal 5'-phosphate. The resulting ammonia molecule is channeled to the active site of PdxS. The chain is Pyridoxal 5'-phosphate synthase subunit PdxT from Thermosipho africanus (strain TCF52B).